A 367-amino-acid chain; its full sequence is Flagellar P-ring protein (367 aa).

The signal sequence occupies residues 1–22 (MRRMLVIRWILAIHLIATQVFA).

It belongs to the FlgI family. The basal body constitutes a major portion of the flagellar organelle and consists of four rings (L,P,S, and M) mounted on a central rod.

It localises to the periplasm. The protein localises to the bacterial flagellum basal body. Assembles around the rod to form the L-ring and probably protects the motor/basal body from shearing forces during rotation. In Legionella pneumophila (strain Lens), this protein is Flagellar P-ring protein.